Reading from the N-terminus, the 246-residue chain is NAD-dependent protein deacylase (246 aa).

The Deacetylase sirtuin-type domain occupies 1–245; it reads MKEFITKHRD…ELIREILDNP (245 aa). 20 to 39 serves as a coordination point for NAD(+); it reads GAGISAESGIPTFRGSEGLW. The substrate site is built by Tyr64 and Arg67. 98-101 is a binding site for NAD(+); the sequence is QNVD. The active-site Proton acceptor is His116. The Zn(2+) site is built by Cys124, Cys127, Cys146, and Cys149. Residues 186–188, 212–214, and Thr230 each bind NAD(+); these read GTS and NPE.

The protein belongs to the sirtuin family. Class III subfamily. Zn(2+) serves as cofactor.

It is found in the cytoplasm. It carries out the reaction N(6)-acetyl-L-lysyl-[protein] + NAD(+) + H2O = 2''-O-acetyl-ADP-D-ribose + nicotinamide + L-lysyl-[protein]. The catalysed reaction is N(6)-succinyl-L-lysyl-[protein] + NAD(+) + H2O = 2''-O-succinyl-ADP-D-ribose + nicotinamide + L-lysyl-[protein]. Its function is as follows. NAD-dependent lysine deacetylase and desuccinylase that specifically removes acetyl and succinyl groups on target proteins. Modulates the activities of several proteins which are inactive in their acylated form. The sequence is that of NAD-dependent protein deacylase from Leptospira interrogans serogroup Icterohaemorrhagiae serovar Lai (strain 56601).